Consider the following 99-residue polypeptide: Small ribosomal subunit protein bS20 (99 aa).

Residues M1 to A20 show a composition bias toward basic residues. The tract at residues M1–A29 is disordered.

It belongs to the bacterial ribosomal protein bS20 family.

In terms of biological role, binds directly to 16S ribosomal RNA. The sequence is that of Small ribosomal subunit protein bS20 from Paracidovorax citrulli (strain AAC00-1) (Acidovorax citrulli).